A 212-amino-acid chain; its full sequence is MAIGLIGRKVGMTRIFTEDGVSIPVTVIEVAGNRVTQVKTLETDGYRALQVTTGTKKANRITKPEAGHFAKSGVEAGRGLWEVRLEDGEGEGIEVGAELNVDIFADVAKVDVTGQSKGKGFQGGVKRWNFRTQDMTHGNSLSHRSNGSIGQNQTPGRVFKGKKMSGHMGAERVTTQNLVVVRVDVERNLLLVRGAVPGATNGDLIIKPAVKA.

The span at 136 to 155 (THGNSLSHRSNGSIGQNQTP) shows a compositional bias: polar residues. A disordered region spans residues 136–157 (THGNSLSHRSNGSIGQNQTPGR). The residue at position 153 (glutamine 153) is an N5-methylglutamine.

It belongs to the universal ribosomal protein uL3 family. As to quaternary structure, part of the 50S ribosomal subunit. Forms a cluster with proteins L14 and L19. Methylated by PrmB.

Its function is as follows. One of the primary rRNA binding proteins, it binds directly near the 3'-end of the 23S rRNA, where it nucleates assembly of the 50S subunit. The polypeptide is Large ribosomal subunit protein uL3 (Shewanella putrefaciens (strain CN-32 / ATCC BAA-453)).